The following is a 930-amino-acid chain: Isoleucine--tRNA ligase (930 aa).

A 'HIGH' region motif is present at residues 57-67 (PYANGNIHVGH). E554 lines the L-isoleucyl-5'-AMP pocket. Positions 595–599 (KMSKS) match the 'KMSKS' region motif. K598 provides a ligand contact to ATP. Positions 888, 891, 908, and 911 each coordinate Zn(2+).

Belongs to the class-I aminoacyl-tRNA synthetase family. IleS type 1 subfamily. As to quaternary structure, monomer. The cofactor is Zn(2+).

The protein resides in the cytoplasm. It catalyses the reaction tRNA(Ile) + L-isoleucine + ATP = L-isoleucyl-tRNA(Ile) + AMP + diphosphate. Its function is as follows. Catalyzes the attachment of isoleucine to tRNA(Ile). As IleRS can inadvertently accommodate and process structurally similar amino acids such as valine, to avoid such errors it has two additional distinct tRNA(Ile)-dependent editing activities. One activity is designated as 'pretransfer' editing and involves the hydrolysis of activated Val-AMP. The other activity is designated 'posttransfer' editing and involves deacylation of mischarged Val-tRNA(Ile). The protein is Isoleucine--tRNA ligase of Streptococcus pneumoniae (strain P1031).